Consider the following 71-residue polypeptide: Antitoxin VapB26 (71 aa).

Antitoxin component of a type II toxin-antitoxin (TA) system. Upon expression in M.smegmatis neutralizes the effect of cognate toxin VapC26. In Mycobacterium tuberculosis (strain ATCC 25618 / H37Rv), this protein is Antitoxin VapB26 (vapB26).